The chain runs to 446 residues: 3-phosphoshikimate 1-carboxyvinyltransferase (446 aa).

Residues K21, S22, and R26 each contribute to the 3-phosphoshikimate site. K21 is a binding site for phosphoenolpyruvate. Positions 94 and 122 each coordinate phosphoenolpyruvate. 3-phosphoshikimate contacts are provided by S167, Q169, D315, and K342. Q169 is a phosphoenolpyruvate binding site. Residue D315 is the Proton acceptor of the active site. 2 residues coordinate phosphoenolpyruvate: R346 and R388.

Belongs to the EPSP synthase family. As to quaternary structure, monomer.

The protein resides in the cytoplasm. It carries out the reaction 3-phosphoshikimate + phosphoenolpyruvate = 5-O-(1-carboxyvinyl)-3-phosphoshikimate + phosphate. It participates in metabolic intermediate biosynthesis; chorismate biosynthesis; chorismate from D-erythrose 4-phosphate and phosphoenolpyruvate: step 6/7. Its function is as follows. Catalyzes the transfer of the enolpyruvyl moiety of phosphoenolpyruvate (PEP) to the 5-hydroxyl of shikimate-3-phosphate (S3P) to produce enolpyruvyl shikimate-3-phosphate and inorganic phosphate. This chain is 3-phosphoshikimate 1-carboxyvinyltransferase, found in Alkalilimnicola ehrlichii (strain ATCC BAA-1101 / DSM 17681 / MLHE-1).